The chain runs to 85 residues: Putative membrane protein insertion efficiency factor (85 aa).

Belongs to the UPF0161 family.

Its subcellular location is the cell inner membrane. Functionally, could be involved in insertion of integral membrane proteins into the membrane. The protein is Putative membrane protein insertion efficiency factor of Tolumonas auensis (strain DSM 9187 / NBRC 110442 / TA 4).